The sequence spans 412 residues: Exodeoxyribonuclease 7 large subunit (412 aa).

Belongs to the XseA family. As to quaternary structure, heterooligomer composed of large and small subunits.

The protein resides in the cytoplasm. The enzyme catalyses Exonucleolytic cleavage in either 5'- to 3'- or 3'- to 5'-direction to yield nucleoside 5'-phosphates.. Functionally, bidirectionally degrades single-stranded DNA into large acid-insoluble oligonucleotides, which are then degraded further into small acid-soluble oligonucleotides. This is Exodeoxyribonuclease 7 large subunit from Nostoc sp. (strain PCC 7120 / SAG 25.82 / UTEX 2576).